We begin with the raw amino-acid sequence, 363 residues long: Spermatogenesis-associated protein 22 (363 aa).

Polar residues-rich tracts occupy residues 1–12, 30–48, 98–108, and 140–157; these read MKRSLNENSARS, QPLT…TPSD, IQSNTGRSQGG, and NDGK…QQKQ. 3 disordered regions span residues 1-51, 98-127, and 140-170; these read MKRS…DNYD, IQSN…NKND, and NDGK…SRNK.

Component of a multiprotein complex with MEIOB and RPA2. Interacts with MEIOB. Interacts with the complex BRME1:HSF2BP:BRCA2. As to expression, highly expressed in adult testis.

It localises to the chromosome. Its function is as follows. Meiosis-specific protein required for homologous recombination in meiosis I. This is Spermatogenesis-associated protein 22 from Homo sapiens (Human).